The primary structure comprises 262 residues: MQVDLLGSAQSAHALHLFHQHSPLVHCMTNDVVQTFTANTLLALGASPAMVIETEEASQFAAIASALLINVGTLTQPRAQAMRAAVEQAKSSQTPWTLDPVAVGALDYRRHFCHELLSFKPAAIRGNASEIMALAGIANGGRGVDTTDAAANAIPAAQTLARETGAIVVVTGEMDYVTDGHRIIGIHGGDPLMTKVVGTGCALSAVVAACCALPGDTLENVASACHWMKQAGERAVARSEGPGSFVPHFLDALWQLTQEVQA.

Methionine 50 contacts substrate. ATP is bound by residues arginine 125 and threonine 171. Glycine 198 lines the substrate pocket.

The protein belongs to the Thz kinase family. Requires Mg(2+) as cofactor.

It catalyses the reaction 5-(2-hydroxyethyl)-4-methylthiazole + ATP = 4-methyl-5-(2-phosphooxyethyl)-thiazole + ADP + H(+). It participates in cofactor biosynthesis; thiamine diphosphate biosynthesis; 4-methyl-5-(2-phosphoethyl)-thiazole from 5-(2-hydroxyethyl)-4-methylthiazole: step 1/1. Functionally, catalyzes the phosphorylation of the hydroxyl group of 4-methyl-5-beta-hydroxyethylthiazole (THZ). This Escherichia coli (strain K12 / MC4100 / BW2952) protein is Hydroxyethylthiazole kinase.